A 454-amino-acid polypeptide reads, in one-letter code: Allantoinase (454 aa).

Zn(2+) is bound by residues histidine 60, histidine 62, lysine 147, histidine 183, histidine 239, and aspartate 312. Lysine 147 carries the post-translational modification N6-carboxylysine.

This sequence belongs to the metallo-dependent hydrolases superfamily. Allantoinase family. In terms of assembly, homotetramer. The cofactor is Zn(2+). Carboxylation allows a single lysine to coordinate two zinc ions.

The catalysed reaction is (S)-allantoin + H2O = allantoate + H(+). The protein operates within nitrogen metabolism; (S)-allantoin degradation; allantoate from (S)-allantoin: step 1/1. Functionally, catalyzes the conversion of allantoin (5-ureidohydantoin) to allantoic acid by hydrolytic cleavage of the five-member hydantoin ring. The protein is Allantoinase of Rubrobacter xylanophilus (strain DSM 9941 / JCM 11954 / NBRC 16129 / PRD-1).